Here is a 217-residue protein sequence, read N- to C-terminus: Probable coenzyme A transferase subunit beta (217 aa).

Residue Glu-50 is part of the active site.

Belongs to the 3-oxoacid CoA-transferase subunit B family. As to quaternary structure, heterodimer of a subunit alpha and a subunit beta.

The protein is Probable coenzyme A transferase subunit beta (yodR) of Bacillus subtilis (strain 168).